The chain runs to 389 residues: Phosphoglycerate kinase (389 aa).

Substrate-binding positions include 19–21 (DYN), arginine 34, 57–60 (HLGR), arginine 117, and arginine 150. ATP contacts are provided by residues lysine 200, glycine 288, glutamate 319, and 347–350 (GGDS).

It belongs to the phosphoglycerate kinase family. In terms of assembly, monomer.

The protein resides in the cytoplasm. The catalysed reaction is (2R)-3-phosphoglycerate + ATP = (2R)-3-phospho-glyceroyl phosphate + ADP. It participates in carbohydrate degradation; glycolysis; pyruvate from D-glyceraldehyde 3-phosphate: step 2/5. This chain is Phosphoglycerate kinase, found in Deinococcus geothermalis (strain DSM 11300 / CIP 105573 / AG-3a).